The chain runs to 358 residues: Heme A synthase (358 aa).

A run of 8 helical transmembrane segments spans residues 25–45, 111–131, 141–161, 176–196, 210–230, 269–289, 304–324, and 326–346; these read LVRY…MVGG, LLAR…WLTG, MLGL…MVAS, IHLT…RGLV, FAGW…LVAG, VQFV…LHAV, TIVL…TLLM, and APLH…AFAV. Position 273 (histidine 273) interacts with heme. Histidine 334 contributes to the heme binding site.

Belongs to the COX15/CtaA family. Type 2 subfamily. In terms of assembly, interacts with CtaB. Heme b serves as cofactor.

It localises to the cell membrane. It carries out the reaction Fe(II)-heme o + 2 A + H2O = Fe(II)-heme a + 2 AH2. It participates in porphyrin-containing compound metabolism; heme A biosynthesis; heme A from heme O: step 1/1. Functionally, catalyzes the conversion of heme O to heme A by two successive hydroxylations of the methyl group at C8. The first hydroxylation forms heme I, the second hydroxylation results in an unstable dihydroxymethyl group, which spontaneously dehydrates, resulting in the formyl group of heme A. This Brucella abortus (strain S19) protein is Heme A synthase.